Consider the following 498-residue polypeptide: tRNA-guanine(15) transglycosylase (498 aa).

The Nucleophile role is filled by aspartate 85. Aspartate 120 contributes to the substrate binding site. Residues cysteine 275, cysteine 277, and cysteine 280 each contribute to the Zn(2+) site.

This sequence belongs to the archaeosine tRNA-ribosyltransferase family. Zn(2+) serves as cofactor.

It carries out the reaction guanosine(15) in tRNA + 7-cyano-7-deazaguanine = 7-cyano-7-carbaguanosine(15) in tRNA + guanine. Its pathway is tRNA modification; archaeosine-tRNA biosynthesis. Its function is as follows. Exchanges the guanine residue with 7-cyano-7-deazaguanine (preQ0) at position 15 in the dihydrouridine loop (D-loop) of archaeal tRNAs. The protein is tRNA-guanine(15) transglycosylase of Sulfolobus acidocaldarius (strain ATCC 33909 / DSM 639 / JCM 8929 / NBRC 15157 / NCIMB 11770).